The following is a 40-amino-acid chain: Subtilisin-like serine protease AS-E1 (40 aa).

A Peptidase S8 domain is found at 4 to 40 (PWGLARISHRTTGATSYVYDDSAGEGTCSYIIDTGIY). Asp36 functions as the Charge relay system in the catalytic mechanism.

Belongs to the peptidase S8 family. Homodimer.

With respect to regulation, strongly inhibited by antipain and PMSF. Inhibited by benzamidine and aprotinin by 80% and 17% respectively. Little or no inhibition by EDTA, E-64, iodoacetic acid, leupeptin and FUT-175. Its function is as follows. Subtilisin-like serine protease. Cleaves prothrombin at 155-Arg-|-Ser-156, 45-Thr-|-Ala-46 and 316-Tyr-|-Ile-317 to produce meizothrombin(desF1)-like molecules. Degrades fibrinogen. Inhibits plasma coagulation. This is Subtilisin-like serine protease AS-E1 from Acremonium sp.